A 260-amino-acid polypeptide reads, in one-letter code: UPF0246 protein Tola_0968 (260 aa).

Belongs to the UPF0246 family.

This chain is UPF0246 protein Tola_0968, found in Tolumonas auensis (strain DSM 9187 / NBRC 110442 / TA 4).